The following is a 92-amino-acid chain: Small ribosomal subunit protein uS19c (92 aa).

The protein belongs to the universal ribosomal protein uS19 family.

It localises to the plastid. Protein S19 forms a complex with S13 that binds strongly to the 16S ribosomal RNA. The polypeptide is Small ribosomal subunit protein uS19c (Aneura mirabilis (Parasitic liverwort)).